Reading from the N-terminus, the 1089-residue chain is Importin subunit beta-3 (1089 aa).

Ser-2 carries the N-acetylserine modification. 24 HEAT repeats span residues 6–39 (EEVN…EEWI), 44–78 (IEYL…ALKA), 96–129 (KEVL…IAEC), 138–165 (PELL…ILTT), 175–207 (INSI…YFKQ), 216–252 (LGIL…LVEL), 260–295 (MFDQ…FSEN), 304–359 (QNYG…ALKL), 361–395 (GEYL…SSAA), 399–439 (ADVL…STDF), 441–481 (PFIQ…FSEF), 484–524 (KDIL…AEAA), 526–568 (NKFI…GFAV), 571–613 (EKFH…CRIL), 615–689 (DDFV…ATLL), 692–735 (QFAV…LLAA), 742–781 (ELVL…IKVM), 788–849 (EDQL…LKTT), 852–890 (HYLK…IQYG), 898–930 (KNAF…CAQY), 938–978 (VCIP…LYAY), 986–1017 (DTYT…QLIE), 1028–1063 (NISA…LLGF), and 1066–1089 (SSDA…KWFA). Thr-830 carries the phosphothreonine modification.

It belongs to the importin beta family. Importin beta-3 subfamily. As to quaternary structure, interacts with Ran (GSP1); interacts specifically with the GTP-bound form of Ran (GTP-Ran), protecting it from GTP hydrolysis and nucleotide exchange. Interacts with RPL25; this interaction is dissociated by binding to Ran-GTP. Interacts with YAP1; this interaction is dissociated by binding to Ran-GTP. Interacts with NOP1; via its rg-NLS. Interacts with SOF1; via its cNLS. Interacts with histones H3 and H4; via their NLS. Interacts with ABF1.

It localises to the cytoplasm. The protein resides in the nucleus. Its function is as follows. Functions in nuclear protein import as nuclear transport receptor. Serves as receptor for classical and arginine/glycine-rich nuclear localization signals (cNLS and rg-NLS) in cargo substrates. Its predominant cargo substrate seems to be ribosomal proteins and ribosome biogenesis trans- and cis-acting factors. Required for nuclear transport of YAP1, NOP1 and SOF1. Mediates the nuclear import of histones H3 and H4. Mediates docking of the importin/substrate complex to the nuclear pore complex (NPC) through binding to repeat-containing nucleoporins. The complex is subsequently translocated through the pore by an energy requiring, Ran-dependent mechanism. At the nucleoplasmic side of the NPC, GTP-Ran binding leads to release of the cargo. The importin is re-exported from the nucleus to the cytoplasm where GTP hydrolysis releases Ran from importin. The directionality of nuclear import is thought to be conferred by an asymmetric distribution of the GTP- and GDP-bound forms of Ran between the cytoplasm and nucleus. Plays a role in protein secretion. This chain is Importin subunit beta-3, found in Saccharomyces cerevisiae (strain ATCC 204508 / S288c) (Baker's yeast).